Here is a 206-residue protein sequence, read N- to C-terminus: Cytochrome b6-f complex iron-sulfur subunit, chloroplastic (206 aa).

Residues 1-29 (MAMITSRRAAAPCKAQATRRSRVMSVVRA) constitute a chloroplast transit peptide. The helical transmembrane segment at 48-68 (ILLGGASLPVGSLALGYGAFF) threads the bilayer. Positions 92–188 (ANAWLATHQK…CDVQEDGLVT (97 aa)) constitute a Rieske domain. Cys-134, His-136, Cys-152, and His-155 together coordinate [2Fe-2S] cluster. An intrachain disulfide couples Cys-139 to Cys-154.

Belongs to the Rieske iron-sulfur protein family. The 4 large subunits of the cytochrome b6-f complex are cytochrome b6, subunit IV (17 kDa polypeptide, petD), cytochrome f and the Rieske protein, while the 4 small subunits are petG, petL, petM and petN. The complex functions as a dimer. [2Fe-2S] cluster serves as cofactor.

It localises to the plastid. It is found in the chloroplast thylakoid membrane. It carries out the reaction 2 oxidized [plastocyanin] + a plastoquinol + 2 H(+)(in) = 2 reduced [plastocyanin] + a plastoquinone + 4 H(+)(out). In terms of biological role, component of the cytochrome b6-f complex, which mediates electron transfer between photosystem II (PSII) and photosystem I (PSI), cyclic electron flow around PSI, and state transitions. This is Cytochrome b6-f complex iron-sulfur subunit, chloroplastic (petC) from Volvox carteri (Green alga).